We begin with the raw amino-acid sequence, 362 residues long: Holliday junction branch migration complex subunit RuvB (362 aa).

A large ATPase domain (RuvB-L) region spans residues P4–Y186. ATP contacts are provided by residues I25, R26, G67, K70, T71, T72, E133–F135, R176, Y186, and R223. Mg(2+) is bound at residue T71. The interval E187 to E257 is small ATPAse domain (RuvB-S). The interval R260–V362 is head domain (RuvB-H). 3 residues coordinate DNA: R296, R315, and R320.

Belongs to the RuvB family. Homohexamer. Forms an RuvA(8)-RuvB(12)-Holliday junction (HJ) complex. HJ DNA is sandwiched between 2 RuvA tetramers; dsDNA enters through RuvA and exits via RuvB. An RuvB hexamer assembles on each DNA strand where it exits the tetramer. Each RuvB hexamer is contacted by two RuvA subunits (via domain III) on 2 adjacent RuvB subunits; this complex drives branch migration. In the full resolvosome a probable DNA-RuvA(4)-RuvB(12)-RuvC(2) complex forms which resolves the HJ.

It localises to the cytoplasm. The enzyme catalyses ATP + H2O = ADP + phosphate + H(+). In terms of biological role, the RuvA-RuvB-RuvC complex processes Holliday junction (HJ) DNA during genetic recombination and DNA repair, while the RuvA-RuvB complex plays an important role in the rescue of blocked DNA replication forks via replication fork reversal (RFR). RuvA specifically binds to HJ cruciform DNA, conferring on it an open structure. The RuvB hexamer acts as an ATP-dependent pump, pulling dsDNA into and through the RuvAB complex. RuvB forms 2 homohexamers on either side of HJ DNA bound by 1 or 2 RuvA tetramers; 4 subunits per hexamer contact DNA at a time. Coordinated motions by a converter formed by DNA-disengaged RuvB subunits stimulates ATP hydrolysis and nucleotide exchange. Immobilization of the converter enables RuvB to convert the ATP-contained energy into a lever motion, pulling 2 nucleotides of DNA out of the RuvA tetramer per ATP hydrolyzed, thus driving DNA branch migration. The RuvB motors rotate together with the DNA substrate, which together with the progressing nucleotide cycle form the mechanistic basis for DNA recombination by continuous HJ branch migration. Branch migration allows RuvC to scan DNA until it finds its consensus sequence, where it cleaves and resolves cruciform DNA. In Rhodospirillum centenum (strain ATCC 51521 / SW), this protein is Holliday junction branch migration complex subunit RuvB.